A 678-amino-acid chain; its full sequence is Zinc finger protein 334 (678 aa).

The KRAB domain maps to valine 8 to glutamate 79. 14 C2H2-type zinc fingers span residues asparagine 235–histidine 257, tyrosine 263–histidine 285, tyrosine 291–histidine 313, tyrosine 319–histidine 341, tyrosine 347–histidine 369, asparagine 375–histidine 397, tyrosine 403–histidine 425, tyrosine 431–histidine 453, tyrosine 459–histidine 481, tyrosine 542–histidine 564, tyrosine 570–histidine 592, tyrosine 598–histidine 620, tyrosine 626–histidine 648, and tyrosine 654–histidine 676.

The protein belongs to the krueppel C2H2-type zinc-finger protein family.

It is found in the nucleus. In terms of biological role, may be involved in transcriptional regulation. This Pongo abelii (Sumatran orangutan) protein is Zinc finger protein 334 (ZNF334).